The following is a 119-amino-acid chain: 5-hydroxyisourate hydrolase (119 aa).

3 residues coordinate substrate: histidine 10, arginine 48, and tyrosine 116.

This sequence belongs to the transthyretin family. 5-hydroxyisourate hydrolase subfamily. Homotetramer.

The enzyme catalyses 5-hydroxyisourate + H2O = 5-hydroxy-2-oxo-4-ureido-2,5-dihydro-1H-imidazole-5-carboxylate + H(+). Its pathway is purine metabolism; urate degradation; (S)-allantoin from urate: step 2/3. In terms of biological role, catalyzes the hydrolysis of 5-hydroxyisourate (HIU) to 2-oxo-4-hydroxy-4-carboxy-5-ureidoimidazoline (OHCU). The sequence is that of 5-hydroxyisourate hydrolase from Deinococcus radiodurans (strain ATCC 13939 / DSM 20539 / JCM 16871 / CCUG 27074 / LMG 4051 / NBRC 15346 / NCIMB 9279 / VKM B-1422 / R1).